The chain runs to 615 residues: Dihydroxy-acid dehydratase (615 aa).

Position 85 (Asp85) interacts with Mg(2+). Residue Cys126 participates in [2Fe-2S] cluster binding. Residues Asp127 and Lys128 each coordinate Mg(2+). Lys128 bears the N6-carboxylysine mark. A [2Fe-2S] cluster-binding site is contributed by Cys199. Glu495 contacts Mg(2+). Ser521 serves as the catalytic Proton acceptor.

It belongs to the IlvD/Edd family. In terms of assembly, homodimer. It depends on [2Fe-2S] cluster as a cofactor. Mg(2+) is required as a cofactor.

The enzyme catalyses (2R)-2,3-dihydroxy-3-methylbutanoate = 3-methyl-2-oxobutanoate + H2O. It catalyses the reaction (2R,3R)-2,3-dihydroxy-3-methylpentanoate = (S)-3-methyl-2-oxopentanoate + H2O. It functions in the pathway amino-acid biosynthesis; L-isoleucine biosynthesis; L-isoleucine from 2-oxobutanoate: step 3/4. The protein operates within amino-acid biosynthesis; L-valine biosynthesis; L-valine from pyruvate: step 3/4. Functionally, functions in the biosynthesis of branched-chain amino acids. Catalyzes the dehydration of (2R,3R)-2,3-dihydroxy-3-methylpentanoate (2,3-dihydroxy-3-methylvalerate) into 2-oxo-3-methylpentanoate (2-oxo-3-methylvalerate) and of (2R)-2,3-dihydroxy-3-methylbutanoate (2,3-dihydroxyisovalerate) into 2-oxo-3-methylbutanoate (2-oxoisovalerate), the penultimate precursor to L-isoleucine and L-valine, respectively. This chain is Dihydroxy-acid dehydratase, found in Mannheimia succiniciproducens (strain KCTC 0769BP / MBEL55E).